The sequence spans 1291 residues: DNA-directed RNA polymerase subunit beta' (1291 aa).

Residues C60, C62, C75, and C78 each contribute to the Zn(2+) site. Positions 535, 537, and 539 each coordinate Mg(2+). Residues C878, C954, C961, and C964 each contribute to the Zn(2+) site.

This sequence belongs to the RNA polymerase beta' chain family. In terms of assembly, the RNAP catalytic core consists of 2 alpha, 1 beta, 1 beta' and 1 omega subunit. When a sigma factor is associated with the core the holoenzyme is formed, which can initiate transcription. Requires Mg(2+) as cofactor. Zn(2+) serves as cofactor.

The catalysed reaction is RNA(n) + a ribonucleoside 5'-triphosphate = RNA(n+1) + diphosphate. Functionally, DNA-dependent RNA polymerase catalyzes the transcription of DNA into RNA using the four ribonucleoside triphosphates as substrates. The chain is DNA-directed RNA polymerase subunit beta' from Thermobifida fusca (strain YX).